Here is a 96-residue protein sequence, read N- to C-terminus: uncharacterized protein (96 aa).

The HTH cro/C1-type domain occupies Ile-38–Ser-91. The segment at residues Ile-49 to Ser-68 is a DNA-binding region (H-T-H motif).

This is an uncharacterized protein from Escherichia coli O157:H7.